A 103-amino-acid chain; its full sequence is Large ribosomal subunit protein bL21 (103 aa).

The protein belongs to the bacterial ribosomal protein bL21 family. As to quaternary structure, part of the 50S ribosomal subunit. Contacts protein L20.

This protein binds to 23S rRNA in the presence of protein L20. The chain is Large ribosomal subunit protein bL21 from Enterobacter sp. (strain 638).